The sequence spans 409 residues: S-adenosylmethionine synthase (409 aa).

Position 141–146 (141–146 (GQGSAD)) interacts with ATP.

Belongs to the AdoMet synthase 2 family. The cofactor is Mg(2+).

The enzyme catalyses L-methionine + ATP + H2O = S-adenosyl-L-methionine + phosphate + diphosphate. The protein operates within amino-acid biosynthesis; S-adenosyl-L-methionine biosynthesis; S-adenosyl-L-methionine from L-methionine: step 1/1. Functionally, catalyzes the formation of S-adenosylmethionine from methionine and ATP. The sequence is that of S-adenosylmethionine synthase from Hyperthermus butylicus (strain DSM 5456 / JCM 9403 / PLM1-5).